The primary structure comprises 216 residues: ATP phosphoribosyltransferase (216 aa).

The protein belongs to the ATP phosphoribosyltransferase family. Short subfamily. As to quaternary structure, heteromultimer composed of HisG and HisZ subunits.

The protein localises to the cytoplasm. The enzyme catalyses 1-(5-phospho-beta-D-ribosyl)-ATP + diphosphate = 5-phospho-alpha-D-ribose 1-diphosphate + ATP. It functions in the pathway amino-acid biosynthesis; L-histidine biosynthesis; L-histidine from 5-phospho-alpha-D-ribose 1-diphosphate: step 1/9. In terms of biological role, catalyzes the condensation of ATP and 5-phosphoribose 1-diphosphate to form N'-(5'-phosphoribosyl)-ATP (PR-ATP). Has a crucial role in the pathway because the rate of histidine biosynthesis seems to be controlled primarily by regulation of HisG enzymatic activity. The polypeptide is ATP phosphoribosyltransferase (Microcystis aeruginosa (strain NIES-843 / IAM M-2473)).